A 521-amino-acid polypeptide reads, in one-letter code: Interleukin-9 receptor (521 aa).

A signal peptide spans 1 to 40 (MGLGRCIWEGWTLESEALRRDMGTWLLACICICTCVCLGV). Topologically, residues 41 to 270 (SVTGEGQGPR…GPLIPPWGWP (230 aa)) are extracellular. Asn117 and Asn156 each carry an N-linked (GlcNAc...) asparagine glycan. The 111-residue stretch at 149 to 259 (PPSDLQSNIS…QPVCFQAPQR (111 aa)) folds into the Fibronectin type-III domain. The WSXWS motif signature appears at 245–249 (WSEWS). A helical transmembrane segment spans residues 271–291 (GNTLVAVSIFLLLTGPTYLLF). Residues 292-521 (KLSPRVKRIF…VLSKARSWTF (230 aa)) are Cytoplasmic-facing. A Box 1 motif motif is present at residues 301-309 (FYQNVPSPA). Positions 413-439 (WAPTSLTRPAPPDSEGSRSSSSSSSSN) are disordered. A compositionally biased stretch (low complexity) spans 429-439 (SRSSSSSSSSN).

Belongs to the type I cytokine receptor family. Type 4 subfamily. As to quaternary structure, interacts with IL9.

It is found in the cell membrane. Its subcellular location is the secreted. Plays an important role in the immune response against parasites by acting as a receptor of IL9. This is Interleukin-9 receptor (IL9R) from Homo sapiens (Human).